The primary structure comprises 422 residues: F-box/WD repeat-containing protein 2 (422 aa).

An F-box domain is found at 54-101 (RDFLKLLPLELSFYLLKWLDPQTLLTCCLVSKQWNKVISACTEVWQTA). WD repeat units lie at residues 146–183 (GHSA…CVYG), 185–221 (QTHT…RTQH), 224–265 (GHTG…NTLT), and 276–314 (LQKC…NCKC). The residue at position 298 (Lys298) is an N6-acetyllysine.

As to quaternary structure, directly interacts with SKP1 and CUL1. As to expression, widely expressed during embryogenesis and in adult tissues.

Substrate-recognition component of the SCF (SKP1-CUL1-F-box protein)-type E3 ubiquitin ligase complex. This is F-box/WD repeat-containing protein 2 (Fbxw2) from Mus musculus (Mouse).